A 105-amino-acid polypeptide reads, in one-letter code: Neuropeptide-like protein 32 (105 aa).

A signal peptide spans 1-22 (MRQFNLLLVFCLIALTALPVFS). Positions 23-54 (FPNGLTMDSIDMEPMGAFDENGAADESPRVKR) are excised as a propeptide. At Gly59 the chain carries Glycine amide. Residue Trp64 is modified to Tryptophan amide. 3 positions are modified to glycine amide: Gly68, Gly73, and Gly80. At Trp86 the chain carries Tryptophan amide. Glycine amide is present on residues Gly91 and Gly98. A Tryptophan amide modification is found at Trp103.

It belongs to the YARP (YGGW-amide related peptide) family.

It is found in the secreted. Its function is as follows. May have antimicrobial activity. This is Neuropeptide-like protein 32 (nlp-32) from Caenorhabditis elegans.